The sequence spans 77 residues: Defensin-like protein 161 (77 aa).

The first 27 residues, 1 to 27 (MAKLSCSYLLVFMLVFSAILMVEKVEG), serve as a signal peptide directing secretion. 4 disulfide bridges follow: Cys-30–Cys-77, Cys-40–Cys-59, Cys-45–Cys-71, and Cys-49–Cys-73.

This sequence belongs to the DEFL family.

The protein resides in the secreted. This is Defensin-like protein 161 (LCR27) from Arabidopsis thaliana (Mouse-ear cress).